The primary structure comprises 343 residues: MVSFKAGINLGGWISQYQVFSKEHFDTFITEKDIETIAEAGFDHVRLPFDYPIIESDDNVGEYKEDGLSYIDRCLEWCKKYNLGLVLDMHHAPGYRFQDFKTSTLFEDPNQQKRFVDIWRFLAKRYINEREHIAFELLNEVVEPDSTRWNKLMLECVKAIREIDSTRWLYIGGNNYNSPDELKNLADIDDDYIVYNFHFYNPFFFTHQKAHWSESAMAYNRTVKYPGQYEGIEEFVKNNPKYSFMMELNNLKLNKELLRKDLKPAIEFREKKKCKLYCGEFGVIAIADLESRIKWHEDYISLLEEYDIGGAVWNYKKMDFEIYNEDRKPVSQELVNILARRKT.

Glu-140 functions as the Proton donor in the catalytic mechanism. Glu-280 serves as the catalytic Nucleophile.

The protein belongs to the glycosyl hydrolase 5 (cellulase A) family.

It catalyses the reaction Endohydrolysis of (1-&gt;4)-beta-D-glucosidic linkages in cellulose, lichenin and cereal beta-D-glucans.. It functions in the pathway glycan metabolism; cellulose degradation. Its function is as follows. This enzyme catalyzes the endohydrolysis of 1,4-beta-glucosidic linkages in cellulose, lichenin and cereal beta-D-glucans. This is Endoglucanase C (celC) from Acetivibrio thermocellus (strain ATCC 27405 / DSM 1237 / JCM 9322 / NBRC 103400 / NCIMB 10682 / NRRL B-4536 / VPI 7372) (Clostridium thermocellum).